A 164-amino-acid polypeptide reads, in one-letter code: Transcription elongation factor GreA (164 aa).

Positions 50–76 (YHAAREEQGQQEARIRQLQELLNNAKV) form a coiled coil.

It belongs to the GreA/GreB family.

Its function is as follows. Necessary for efficient RNA polymerase transcription elongation past template-encoded arresting sites. The arresting sites in DNA have the property of trapping a certain fraction of elongating RNA polymerases that pass through, resulting in locked ternary complexes. Cleavage of the nascent transcript by cleavage factors such as GreA or GreB allows the resumption of elongation from the new 3'terminus. GreA releases sequences of 2 to 3 nucleotides. In Mycobacteroides abscessus (strain ATCC 19977 / DSM 44196 / CCUG 20993 / CIP 104536 / JCM 13569 / NCTC 13031 / TMC 1543 / L948) (Mycobacterium abscessus), this protein is Transcription elongation factor GreA.